We begin with the raw amino-acid sequence, 359 residues long: Pyruvate dehydrogenase E1 component subunit beta, mitochondrial (359 aa).

Residues 1 to 30 constitute a mitochondrion transit peptide; that stretch reads MAVVAVLVRKPLEQVSGLLRRRFHRTAPAA. Residue tyrosine 67 is modified to Phosphotyrosine. A thiamine diphosphate-binding site is contributed by glutamate 89. K(+)-binding residues include isoleucine 142, alanine 190, isoleucine 191, aspartate 193, and asparagine 195. Lysine 354 carries the post-translational modification N6-acetyllysine.

As to quaternary structure, heterotetramer of two PDHA1 and two PDHB subunits. The heterotetramer interacts with DLAT, and is part of the multimeric pyruvate dehydrogenase complex that contains multiple copies of pyruvate dehydrogenase (E1), dihydrolipoamide acetyltransferase (DLAT, E2) and lipoamide dehydrogenase (DLD, E3). These subunits are bound to an inner core composed of about 48 DLAT and 12 PDHX molecules. Interacts with DLAT. Requires thiamine diphosphate as cofactor.

It localises to the mitochondrion matrix. It carries out the reaction N(6)-[(R)-lipoyl]-L-lysyl-[protein] + pyruvate + H(+) = N(6)-[(R)-S(8)-acetyldihydrolipoyl]-L-lysyl-[protein] + CO2. The pyruvate dehydrogenase complex catalyzes the overall conversion of pyruvate to acetyl-CoA and CO(2), and thereby links the glycolytic pathway to the tricarboxylic cycle. The protein is Pyruvate dehydrogenase E1 component subunit beta, mitochondrial (PDHB) of Bos taurus (Bovine).